A 66-amino-acid chain; its full sequence is Large ribosomal subunit protein bL35 (66 aa).

The span at Met1–Arg16 shows a compositional bias: basic residues. Residues Met1–Gly20 form a disordered region.

It belongs to the bacterial ribosomal protein bL35 family.

The sequence is that of Large ribosomal subunit protein bL35 from Lactococcus lactis subsp. lactis (strain IL1403) (Streptococcus lactis).